Consider the following 320-residue polypeptide: Polyprenyl transferase pyr6 (320 aa).

6 helical membrane passes run 22 to 42 (KYNC…AAAS), 60 to 80 (GLAF…NDWI), 101 to 121 (LATR…VWLM), 127 to 147 (GQNL…YPFG), 155 to 175 (LGIY…LPAW), and 186 to 206 (PDLL…TIYF). N224 carries an N-linked (GlcNAc...) asparagine glycan. The chain crosses the membrane as a helical span at residues 233-253 (YVHGLLLLQAVAVVMVIPWIL). Residue N256 is glycosylated (N-linked (GlcNAc...) asparagine). Transmembrane regions (helical) follow at residues 260-280 (WLWF…LYLF) and 296-316 (FALG…VSGS).

This sequence belongs to the UbiA prenyltransferase family. The cofactor is Mg(2+).

The protein localises to the membrane. The enzyme catalyses 4-hydroxy-6-(pyridin-3-yl)-2H-pyran-2-one + (2E,6E)-farnesyl diphosphate = 4-hydroxy-3-[(2E,6E)-farnesyl]-6-(pyridin-3-yl)-2H-pyran-2-one + diphosphate. The protein operates within secondary metabolite biosynthesis; terpenoid biosynthesis. Functionally, polyprenyl transferase; part of the gene cluster that mediates the biosynthesis of pyripyropene A, a specific human acyl-coenzyme A:cholesterol acyltransferase 2 inhibitor. The first step of the pathway is the synthesis of nicotinyl-CoA from nicotinic acid by the nicotinic acid-CoA ligase pyr1. Nicotinyl-CoA is then a substrate of polyketide synthase pyr2 to produce 4-hydroxy-6-(3-pyridinyl)-2H-pyran-2-one (HPPO) which is further prenylated by the polyprenyl transferase pyr6 to yield farnesyl-HPPO. The next steps consist of an epoxidation of farnesyl-HPPO to epoxyfarnesyl-HPPO by FAD-dependent monooxygenase pyr5 and a cyclization of the terpenoid portion by the terpene cyclase pyr4 to yield deacetyl-pyripyropene E. The 2 cytochrome P450 monooxygenases pyr3 and pyr9, and the 2 acetyltransferases pyr7 and pyr8 are involved in the conversion of deacetyl-pyripyropene E into pyripyropene A through several cycles of oxidation and acetylation steps. Pyr7 acetylates deacetyl-pyripyropene E to pyripyropene E which is oxidized to 11-deacetyl-pyripyropene O by pyr3, which is in turn acetylated into pyripyropene O by pyr8. Pyripyropene O is then oxidized to deacetyl-pyripyropene A by pyr9. Deacetyl-pyripyropene A is finally acetylated to pyripyropene A by pyr8. This is Polyprenyl transferase pyr6 from Aspergillus fumigatus (strain ATCC MYA-4609 / CBS 101355 / FGSC A1100 / Af293) (Neosartorya fumigata).